We begin with the raw amino-acid sequence, 262 residues long: tRNA (guanine-N(1)-)-methyltransferase (262 aa).

S-adenosyl-L-methionine is bound by residues Gly112 and 132–137 (IGDYIL).

Belongs to the RNA methyltransferase TrmD family. In terms of assembly, homodimer.

It localises to the cytoplasm. The catalysed reaction is guanosine(37) in tRNA + S-adenosyl-L-methionine = N(1)-methylguanosine(37) in tRNA + S-adenosyl-L-homocysteine + H(+). Its function is as follows. Specifically methylates guanosine-37 in various tRNAs. The protein is tRNA (guanine-N(1)-)-methyltransferase of Desulfatibacillum aliphaticivorans.